Here is a 630-residue protein sequence, read N- to C-terminus: YTH domain-containing family protein 1 (630 aa).

3 disordered regions span residues 38 to 113 (DMTQ…YMQQ), 160 to 183 (YYPQGAQFPNHGPMPQNSMLAGPY), and 200 to 241 (QVGD…QSGH). A compositionally biased stretch (polar residues) spans 70 to 102 (PGQQQQHQYGSPPNTNGNAQPMPQAHGNNTMNS). Residues 382–590 (EKYFILKSLT…SVGRKLTGLF (209 aa)) enclose the YTH domain.

This sequence belongs to the YTHDF family. YTHDF1 subfamily.

Its subcellular location is the cytoplasm. It localises to the P-body. Functionally, specifically recognizes and binds N6-methyladenosine (m6A)-containing mRNAs, and regulates their stability. M6A is a modification present at internal sites of mRNAs and some non-coding RNAs and plays a role in mRNA stability and processing. Plays a role in pathogenicity towards plant host. This Pyricularia oryzae (strain 70-15 / ATCC MYA-4617 / FGSC 8958) (Rice blast fungus) protein is YTH domain-containing family protein 1.